The chain runs to 194 residues: Peptidyl-tRNA hydrolase (194 aa).

Residue Y17 participates in tRNA binding. H22 acts as the Proton acceptor in catalysis. TRNA contacts are provided by F68, N70, and N116.

This sequence belongs to the PTH family. In terms of assembly, monomer.

The protein localises to the cytoplasm. The enzyme catalyses an N-acyl-L-alpha-aminoacyl-tRNA + H2O = an N-acyl-L-amino acid + a tRNA + H(+). Functionally, hydrolyzes ribosome-free peptidyl-tRNAs (with 1 or more amino acids incorporated), which drop off the ribosome during protein synthesis, or as a result of ribosome stalling. Catalyzes the release of premature peptidyl moieties from peptidyl-tRNA molecules trapped in stalled 50S ribosomal subunits, and thus maintains levels of free tRNAs and 50S ribosomes. This chain is Peptidyl-tRNA hydrolase, found in Actinobacillus succinogenes (strain ATCC 55618 / DSM 22257 / CCUG 43843 / 130Z).